We begin with the raw amino-acid sequence, 1157 residues long: Folliculin-interacting protein 1 (1157 aa).

The uDENN FNIP1/2-type domain maps to 37–467 (FDPSQIRLIV…TVMPNGQPPI (431 aa)). 4 disordered regions span residues 92 to 120 (PGGD…CPKY), 616 to 665 (SQQE…TKVE), 769 to 796 (SPPT…NRDC), and 904 to 955 (VPHG…NYYG). Residues 95–111 (DSSSSLDSSINSSSSFS) are compositionally biased toward low complexity. Residues 475–1083 (SSQSVDMLAK…VSNLLHSTLQ (609 aa)) enclose the cDENN FNIP1/2-type domain. A compositionally biased stretch (basic and acidic residues) spans 651–664 (ADGHQPRTCQDTKV). Basic and acidic residues predominate over residues 904–916 (VPHGDRENAEKKV). Residues 1093-1148 (FCVMHLEDRLQELYFKSKMLSEYLKGQMRVHVKELGVVLGIESSDLPLLAAVASTH) enclose the dDENN FNIP1/2-type domain.

This sequence belongs to the FNIP family. Homodimer and homomultimer. Heterodimer and heteromultimer with FNIP2. Component of the lysosomal folliculin complex (LFC).

It is found in the lysosome membrane. The protein resides in the cytoplasm. It localises to the cytosol. In terms of biological role, binding partner of the GTPase-activating protein FLCN: involved in the cellular response to amino acid availability by regulating the non-canonical mTORC1 signaling cascade controlling the MiT/TFE factors TFEB and TFE3. Required to promote FLCN recruitment to lysosomes and interaction with Rag GTPases, leading to activation of the non-canonical mTORC1 signaling. In low-amino acid conditions, component of the lysosomal folliculin complex (LFC) on the membrane of lysosomes, which inhibits the GTPase-activating activity of FLCN, thereby inactivating mTORC1 and promoting nuclear translocation of TFEB and TFE3. Upon amino acid restimulation, disassembly of the LFC complex liberates the GTPase-activating activity of FLCN, leading to activation of mTORC1 and subsequent inactivation of TFEB and TFE3. In addition to its role in mTORC1 signaling, also acts as a co-chaperone of HSP90AA1/Hsp90: inhibits the ATPase activity of HSP90AA1/Hsp90, leading to activate both kinase and non-kinase client proteins of HSP90AA1/Hsp90. Acts as a scaffold to load client protein FLCN onto HSP90AA1/Hsp90. This Gallus gallus (Chicken) protein is Folliculin-interacting protein 1.